The chain runs to 146 residues: Nucleoside diphosphate kinase (146 aa).

Positions 11, 59, 87, 93, 104, and 114 each coordinate ATP. The active-site Pros-phosphohistidine intermediate is the His-117.

It belongs to the NDK family. As to quaternary structure, homotetramer. Requires Mg(2+) as cofactor.

It localises to the cytoplasm. It catalyses the reaction a 2'-deoxyribonucleoside 5'-diphosphate + ATP = a 2'-deoxyribonucleoside 5'-triphosphate + ADP. The enzyme catalyses a ribonucleoside 5'-diphosphate + ATP = a ribonucleoside 5'-triphosphate + ADP. Major role in the synthesis of nucleoside triphosphates other than ATP. The ATP gamma phosphate is transferred to the NDP beta phosphate via a ping-pong mechanism, using a phosphorylated active-site intermediate. The protein is Nucleoside diphosphate kinase of Anaeromyxobacter sp. (strain Fw109-5).